A 379-amino-acid polypeptide reads, in one-letter code: Cytochrome b (379 aa).

Transmembrane regions (helical) follow at residues 33–53 (FGSL…FLAM), 77–98 (WLIR…FIHV), 113–133 (WNIG…GYVL), and 178–198 (FFAF…VHLL). Heme b-binding residues include His83 and His97. The heme b site is built by His182 and His196. An a ubiquinone-binding site is contributed by His201. 4 helical membrane-spanning segments follow: residues 226-246 (IKDL…ALFF), 288-308 (LGGV…PLLN), 320-340 (ITQT…WIGG), and 347-367 (FTTI…ILMP).

Belongs to the cytochrome b family. As to quaternary structure, the cytochrome bc1 complex contains 11 subunits: 3 respiratory subunits (MT-CYB, CYC1 and UQCRFS1), 2 core proteins (UQCRC1 and UQCRC2) and 6 low-molecular weight proteins (UQCRH/QCR6, UQCRB/QCR7, UQCRQ/QCR8, UQCR10/QCR9, UQCR11/QCR10 and a cleavage product of UQCRFS1). This cytochrome bc1 complex then forms a dimer. The cofactor is heme b.

It is found in the mitochondrion inner membrane. Its function is as follows. Component of the ubiquinol-cytochrome c reductase complex (complex III or cytochrome b-c1 complex) that is part of the mitochondrial respiratory chain. The b-c1 complex mediates electron transfer from ubiquinol to cytochrome c. Contributes to the generation of a proton gradient across the mitochondrial membrane that is then used for ATP synthesis. This chain is Cytochrome b (MT-CYB), found in Akodon aerosus (Highland grass mouse).